The primary structure comprises 106 residues: Iron-sulfur cluster assembly protein CyaY (106 aa).

Belongs to the frataxin family.

In terms of biological role, involved in iron-sulfur (Fe-S) cluster assembly. May act as a regulator of Fe-S biogenesis. The chain is Iron-sulfur cluster assembly protein CyaY from Pectobacterium carotovorum subsp. carotovorum (strain PC1).